The chain runs to 408 residues: LL-diaminopimelate aminotransferase (408 aa).

Residues tyrosine 15 and glycine 42 each contribute to the substrate site. Pyridoxal 5'-phosphate-binding positions include tyrosine 72, serine 108–lysine 109, tyrosine 132, asparagine 187, tyrosine 218, and serine 246–serine 248. Substrate contacts are provided by lysine 109, tyrosine 132, and asparagine 187. Lysine 249 carries the N6-(pyridoxal phosphate)lysine modification. Pyridoxal 5'-phosphate is bound by residues arginine 257 and asparagine 291. Substrate contacts are provided by asparagine 291 and arginine 387.

This sequence belongs to the class-I pyridoxal-phosphate-dependent aminotransferase family. LL-diaminopimelate aminotransferase subfamily. In terms of assembly, homodimer. It depends on pyridoxal 5'-phosphate as a cofactor.

The catalysed reaction is (2S,6S)-2,6-diaminopimelate + 2-oxoglutarate = (S)-2,3,4,5-tetrahydrodipicolinate + L-glutamate + H2O + H(+). It functions in the pathway amino-acid biosynthesis; L-lysine biosynthesis via DAP pathway; LL-2,6-diaminopimelate from (S)-tetrahydrodipicolinate (aminotransferase route): step 1/1. Its function is as follows. Involved in the synthesis of meso-diaminopimelate (m-DAP or DL-DAP), required for both lysine and peptidoglycan biosynthesis. Catalyzes the direct conversion of tetrahydrodipicolinate to LL-diaminopimelate. In Prochlorococcus marinus (strain NATL1A), this protein is LL-diaminopimelate aminotransferase.